Here is a 539-residue protein sequence, read N- to C-terminus: Beta-apo-4'-carotenal oxygenase (539 aa).

Active-site residues include Glu228 and Cys262.

The protein belongs to the aldehyde dehydrogenase family.

The catalysed reaction is 4'-apo-beta-carotenal + NAD(+) + H2O = neurosporaxanthin + NADH + 2 H(+). Beta-apo-4'-carotenal oxygenase involved in the last step of synthesis of neurosporaxanthin, a carboxylic apocarotenoid acting as an essential protective pigments and leading to orange pigmentation. Converts the aldehyde beta-apo-4'-carotenal into neurosporaxanthin. Is also able to use shorter apocarotenals as substrates (such as beta-apo-8'-carotenal (C30), beta-apo-10'-carotenal (C27), or the acyclic apocarotenal apo-8'-lycopenal (C30)), indicating wide substrate specificity. Neurosporaxanthin is synthesized from geranyl-geranyl pyrophosphate (GGPP) through several enzymatic activities. Phytoene synthase activity performed by the bifunctional enzyme carAR first produces phytoene from geranyl-geranyl pyrophosphate (GGPP). The phytoene dehydrogenase carB then introduces 4 desaturations to lead to lycopene which is substrate of the carotene cyclase activity of carAR that leads to the production of gamma-carotene. CarB then performs a 5th desaturation reaction to yield torulene. Torulene is the substrate of the dioxidase carT that breaks the molecule, removing five carbon atoms to yield beta-apo-4'-carotenal, whereas the aldehyde dehydrogenase carD mediates the last step by converting beta-apo-4'-carotenal into neurosporaxanthin. This chain is Beta-apo-4'-carotenal oxygenase, found in Gibberella fujikuroi (strain CBS 195.34 / IMI 58289 / NRRL A-6831) (Bakanae and foot rot disease fungus).